The primary structure comprises 249 residues: Triosephosphate isomerase (249 aa).

Residue 9 to 11 (NWK) participates in substrate binding. The active-site Electrophile is the histidine 95. The active-site Proton acceptor is the glutamate 167. Residues glycine 173, serine 213, and 234–235 (GG) contribute to the substrate site.

This sequence belongs to the triosephosphate isomerase family. In terms of assembly, homodimer.

The protein resides in the cytoplasm. It catalyses the reaction D-glyceraldehyde 3-phosphate = dihydroxyacetone phosphate. Its pathway is carbohydrate biosynthesis; gluconeogenesis. The protein operates within carbohydrate degradation; glycolysis; D-glyceraldehyde 3-phosphate from glycerone phosphate: step 1/1. Functionally, involved in the gluconeogenesis. Catalyzes stereospecifically the conversion of dihydroxyacetone phosphate (DHAP) to D-glyceraldehyde-3-phosphate (G3P). The polypeptide is Triosephosphate isomerase (Dictyoglomus thermophilum (strain ATCC 35947 / DSM 3960 / H-6-12)).